A 477-amino-acid chain; its full sequence is Glycogen synthase (477 aa).

Lysine 15 lines the ADP-alpha-D-glucose pocket.

Belongs to the glycosyltransferase 1 family. Bacterial/plant glycogen synthase subfamily.

It catalyses the reaction [(1-&gt;4)-alpha-D-glucosyl](n) + ADP-alpha-D-glucose = [(1-&gt;4)-alpha-D-glucosyl](n+1) + ADP + H(+). It functions in the pathway glycan biosynthesis; glycogen biosynthesis. Functionally, synthesizes alpha-1,4-glucan chains using ADP-glucose. This Clostridium acetobutylicum (strain ATCC 824 / DSM 792 / JCM 1419 / IAM 19013 / LMG 5710 / NBRC 13948 / NRRL B-527 / VKM B-1787 / 2291 / W) protein is Glycogen synthase.